The sequence spans 394 residues: Junctional adhesion molecule-like (394 aa).

The signal sequence occupies residues 1–19 (MFCPLKLILLPVLLDYSLG). Ig-like V-type domains lie at 20–132 (LNDL…KAVV) and 137–250 (PEEP…IVLH). Residues 20 to 275 (LNDLNVSPPE…RPLVLGGNQL (256 aa)) are Extracellular-facing. Disulfide bonds link cysteine 42/cysteine 116 and cysteine 155/cysteine 234. 2 N-linked (GlcNAc...) asparagine glycosylation sites follow: asparagine 76 and asparagine 231. A helical transmembrane segment spans residues 276–296 (VIIVGIVCATILLLPVLILIV). Residues 297–394 (KKTCGNKSSV…GGMPKTQQAF (98 aa)) lie on the Cytoplasmic side of the membrane. Residues 369–394 (PSLRSDRNNSLEKKSGGGMPKTQQAF) form a disordered region. The segment covering 372 to 383 (RSDRNNSLEKKS) has biased composition (basic and acidic residues).

This sequence belongs to the immunoglobulin superfamily. As to quaternary structure, homodimer; active form in leukocyte-endothelial cell adhesion. Interacts (homodimeric form) with CXADR. Interacts (via cytoplasmic domain) with the PI3 kinase; upon CXADR-binding. Interacts with ITGA4 and ITGB1; integrin alpha-4/beta-1 may regulate leukocyte to endothelial cells adhesion by controlling JAML homodimerization. In terms of tissue distribution, expression is restricted to the hematopoietic tissues with the exception of liver. Expressed in fetal liver, spleen and thymus. Preferentially expressed by mature leukocytes (at protein level).

The protein resides in the cell membrane. It is found in the cell junction. Functionally, transmembrane protein of the plasma membrane of leukocytes that control their migration and activation through interaction with CXADR, a plasma membrane receptor found on adjacent epithelial and endothelial cells. The interaction between both receptors mediates the activation of gamma-delta T-cells, a subpopulation of T-cells residing in epithelia and involved in tissue homeostasis and repair. Upon epithelial CXADR-binding, JAML induces downstream cell signaling events in gamma-delta T-cells through PI3-kinase and MAP kinases. It results in proliferation and production of cytokines and growth factors by T-cells that in turn stimulate epithelial tissues repair. It also controls the transmigration of leukocytes within epithelial and endothelial tissues through adhesive interactions with epithelial and endothelial CXADR. This is Junctional adhesion molecule-like from Homo sapiens (Human).